The primary structure comprises 278 residues: Energy-coupling factor transporter ATP-binding protein EcfA (278 aa).

The ABC transporter domain maps to 4-239 (LETRDLKYSY…SETVRSANLR (236 aa)). Residue 37-44 (GPNGAGKS) coordinates ATP.

Belongs to the ABC transporter superfamily. Energy-coupling factor EcfA family. As to quaternary structure, forms a stable energy-coupling factor (ECF) transporter complex composed of 2 membrane-embedded substrate-binding proteins (S component), 2 ATP-binding proteins (A component) and 2 transmembrane proteins (T component).

The protein localises to the cell membrane. Functionally, ATP-binding (A) component of a common energy-coupling factor (ECF) ABC-transporter complex. Unlike classic ABC transporters this ECF transporter provides the energy necessary to transport a number of different substrates. The polypeptide is Energy-coupling factor transporter ATP-binding protein EcfA (Methanococcus maripaludis (strain DSM 14266 / JCM 13030 / NBRC 101832 / S2 / LL)).